Here is a 217-residue protein sequence, read N- to C-terminus: Octanoyltransferase (217 aa).

The BPL/LPL catalytic domain occupies 32-207 (SESPDELWIV…TFSQLLGYQH (176 aa)). Substrate-binding positions include 71–78 (RGGQVTYH), 138–140 (SLG), and 151–153 (GLA). Cys-169 serves as the catalytic Acyl-thioester intermediate.

It belongs to the LipB family.

The protein localises to the cytoplasm. It catalyses the reaction octanoyl-[ACP] + L-lysyl-[protein] = N(6)-octanoyl-L-lysyl-[protein] + holo-[ACP] + H(+). Its pathway is protein modification; protein lipoylation via endogenous pathway; protein N(6)-(lipoyl)lysine from octanoyl-[acyl-carrier-protein]: step 1/2. Catalyzes the transfer of endogenously produced octanoic acid from octanoyl-acyl-carrier-protein onto the lipoyl domains of lipoate-dependent enzymes. Lipoyl-ACP can also act as a substrate although octanoyl-ACP is likely to be the physiological substrate. In Shewanella sp. (strain W3-18-1), this protein is Octanoyltransferase.